We begin with the raw amino-acid sequence, 103 residues long: N(4)-acetylcytidine amidohydrolase (103 aa).

The region spanning 6-92 is the ASCH domain; the sequence is TFFERFEPGI…VIQEIYPGLE (87 aa). Catalysis depends on K20, which acts as the Proton acceptor. T23 (nucleophile) is an active-site residue. Catalysis depends on E73, which acts as the Proton donor.

Belongs to the N(4)-acetylcytidine amidohydrolase family.

The enzyme catalyses N(4)-acetylcytidine + H2O = cytidine + acetate + H(+). The catalysed reaction is N(4)-acetyl-2'-deoxycytidine + H2O = 2'-deoxycytidine + acetate + H(+). It catalyses the reaction N(4)-acetylcytosine + H2O = cytosine + acetate + H(+). Its function is as follows. Catalyzes the hydrolysis of N(4)-acetylcytidine (ac4C). The polypeptide is N(4)-acetylcytidine amidohydrolase (Shewanella sp. (strain MR-7)).